The primary structure comprises 211 residues: Arginine exporter protein ArgO (211 aa).

Helical transmembrane passes span methionine 1–proline 21, leucine 37–glycine 57, leucine 68–leucine 88, isoleucine 111–valine 131, tryptophan 147–alanine 167, and alanine 179–alanine 199.

This sequence belongs to the LysE/ArgO transporter (TC 2.A.75) family.

The protein localises to the cell inner membrane. It carries out the reaction L-arginine(in) = L-arginine(out). Its function is as follows. Involved in the export of arginine. Important to control the intracellular level of arginine and the correct balance between arginine and lysine. The sequence is that of Arginine exporter protein ArgO from Salmonella paratyphi A (strain ATCC 9150 / SARB42).